The following is a 333-amino-acid chain: Acetyltransferase Pat (333 aa).

3',5'-cyclic AMP-binding positions include 88–91 (GEIA), 98–99 (RS), and Arg138. The N-acetyltransferase domain maps to 156–318 (LMLRPVLPGD…GELSLGREMV (163 aa)). Position 173 (His173) interacts with substrate. Asp214 is a binding site for Mg(2+). Substrate is bound by residues 238-240 (FTV), 246-251 (GRGIGS), Asn277, and Arg286.

Homodimer. The cofactor is Mg(2+).

Autoinhibited and allosterically activated by 3,5-cyclic adenosine monophosphate (cAMP). An extensive conformational rearrangement relieves this autoinhibition by means of a substrate-mimicking lid that covers the protein-substrate binding surface. Its function is as follows. Catalyzes specifically the acetylation of the epsilon-amino group of a highly conserved lysine residue in acetyl-CoA synthetase (ACS). This acetylation results in the inactivation of ACS activity and could be important for mycobacteria to adjust to environmental changes. The sequence is that of Acetyltransferase Pat from Mycobacterium tuberculosis (strain ATCC 25618 / H37Rv).